The primary structure comprises 423 residues: Imidazolonepropionase (423 aa).

Fe(3+) contacts are provided by histidine 80 and histidine 82. Histidine 80 and histidine 82 together coordinate Zn(2+). 3 residues coordinate 4-imidazolone-5-propanoate: arginine 89, tyrosine 152, and histidine 185. Residue tyrosine 152 coordinates N-formimidoyl-L-glutamate. Histidine 250 is a Fe(3+) binding site. Residue histidine 250 coordinates Zn(2+). Glutamine 253 provides a ligand contact to 4-imidazolone-5-propanoate. Aspartate 325 is a binding site for Fe(3+). Residue aspartate 325 participates in Zn(2+) binding. Positions 327 and 329 each coordinate N-formimidoyl-L-glutamate. Threonine 330 is a 4-imidazolone-5-propanoate binding site.

Belongs to the metallo-dependent hydrolases superfamily. HutI family. Requires Zn(2+) as cofactor. Fe(3+) serves as cofactor.

Its subcellular location is the cytoplasm. The catalysed reaction is 4-imidazolone-5-propanoate + H2O = N-formimidoyl-L-glutamate. The protein operates within amino-acid degradation; L-histidine degradation into L-glutamate; N-formimidoyl-L-glutamate from L-histidine: step 3/3. Functionally, catalyzes the hydrolytic cleavage of the carbon-nitrogen bond in imidazolone-5-propanoate to yield N-formimidoyl-L-glutamate. It is the third step in the universal histidine degradation pathway. The chain is Imidazolonepropionase from Cupriavidus pinatubonensis (strain JMP 134 / LMG 1197) (Cupriavidus necator (strain JMP 134)).